The following is a 616-amino-acid chain: Chaperone protein HscA (616 aa).

This sequence belongs to the heat shock protein 70 family.

Functionally, chaperone involved in the maturation of iron-sulfur cluster-containing proteins. Has a low intrinsic ATPase activity which is markedly stimulated by HscB. Involved in the maturation of IscU. This is Chaperone protein HscA from Serratia proteamaculans (strain 568).